The sequence spans 338 residues: (2Z,6E)-hedycaryol synthase (338 aa).

2 residues coordinate Mg(2+): D82 and E87. The short motif at 82 to 87 (DDQIDE) is the DDXXXE motif element. Residue R175 participates in substrate binding. Residues N221 and S225 each contribute to the Mg(2+) site. The NXXXSXXXE motif signature appears at 221-229 (NDVFSVERE). R228 contributes to the substrate binding site. Residue E229 participates in Mg(2+) binding.

It belongs to the terpene synthase family. In terms of assembly, homodimer. It depends on Mg(2+) as a cofactor.

It catalyses the reaction (2E,6E)-farnesyl diphosphate + H2O = (2Z,6E)-hedycaryol + diphosphate. Its pathway is secondary metabolite biosynthesis; terpenoid biosynthesis. Its function is as follows. Catalyzes the conversion of (2E,6E)-farnesyl diphosphate (FPP) into (2Z,6E)-hedycaryol via a 1,11-cyclization. The sequence is that of (2Z,6E)-hedycaryol synthase from Kitasatospora setae (strain ATCC 33774 / DSM 43861 / JCM 3304 / KCC A-0304 / NBRC 14216 / KM-6054) (Streptomyces setae).